Here is a 314-residue protein sequence, read N- to C-terminus: Deoxymugineic acid synthase 1 (314 aa).

D44 lines the NADP(+) pocket. The Proton donor role is filled by Y49. H112 is a substrate binding site. Residues 158–159, Q180, 258–266, and 273–281 contribute to the NADP(+) site; these read CN, FDEGRMKEN, and ELSEEERQR.

Belongs to the aldo/keto reductase family.

It catalyses the reaction 2'-deoxymugineate + NAD(+) = 3''-deamino-3''-oxonicotianamine + NADH + H(+). The catalysed reaction is 2'-deoxymugineate + NADP(+) = 3''-deamino-3''-oxonicotianamine + NADPH + H(+). It participates in siderophore biosynthesis. Catalyzes the reduction of a 3''-keto intermediate during the biosynthesis of 2'-deoxymugineic acid (DMA) from L-Met. Involved in the formation of phytosiderophores (MAs) belonging to the mugineic acid family and required to acquire iron. This is Deoxymugineic acid synthase 1 from Zea mays (Maize).